The primary structure comprises 290 residues: Forkhead box protein O3B (290 aa).

Disordered stretches follow at residues 1-30 and 44-239; these read METDLAEMPEKGVLSSQDSPHFQEKSTEEG and AAAA…SSRR. 2 stretches are compositionally biased toward low complexity: residues 44–59 and 75–91; these read AAAAAAPGSRSLRGVH and RTPAAAGRAAKMAEAPA. Residue threonine 117 is modified to Phosphothreonine; by PKB/AKT1. The span at 142 to 153 shows a compositional bias: acidic residues; it reads IPEEEDDEDDED. A DNA-binding region (fork-head) is located at residues 242-290; it reads WGNLSYADLITRAIESSPDRRLTLSQIYEWMVSCVPYFKDKGNSNSSAG.

It is found in the cytoplasm. The protein localises to the cytosol. Its function is as follows. Transcription factor. This chain is Forkhead box protein O3B, found in Homo sapiens (Human).